A 499-amino-acid polypeptide reads, in one-letter code: L-arabinose isomerase (499 aa).

Positions 306, 333, 350, and 449 each coordinate Mn(2+).

The protein belongs to the arabinose isomerase family. The cofactor is Mn(2+).

The enzyme catalyses beta-L-arabinopyranose = L-ribulose. The protein operates within carbohydrate degradation; L-arabinose degradation via L-ribulose; D-xylulose 5-phosphate from L-arabinose (bacterial route): step 1/3. In terms of biological role, catalyzes the conversion of L-arabinose to L-ribulose. The protein is L-arabinose isomerase of Tolumonas auensis (strain DSM 9187 / NBRC 110442 / TA 4).